Consider the following 63-residue polypeptide: Hyphancin-3G (63 aa).

The N-terminal stretch at 1–22 (MNFSRILFFMFACFVALASVSA) is a signal peptide. A propeptide spans 23–26 (VPEP) (removed by a dipeptidylpeptidase). Leucine 61 is modified (leucine amide).

It belongs to the cecropin family.

Its subcellular location is the secreted. In terms of biological role, has antibacterial activity. This is Hyphancin-3G from Hyphantria cunea (Fall webworm moth).